Consider the following 185-residue polypeptide: MADTDAAPAAPAPSTPKKAAKKKASKPKTPASHPKYSDMIASALESLKEKKGSSRQAILKYVKANFTVGDNANVHIKQALKRGVTSGQLRHVKGSGASGSFLLAEKTKTPKKAAAKKATPKKKPAAKKTKKPAAKKATKKPAKKPAAKKKVAKPAAKKAAKPVAKKATPKKKVVKKAAKGKGKKK.

Disordered stretches follow at residues 1–37 and 90–185; these read MADT…PKYS and RHVK…GKKK. The region spanning 32–105 is the H15 domain; it reads SHPKYSDMIA…GASGSFLLAE (74 aa). The segment covering 109-185 has biased composition (basic residues); the sequence is TPKKAAAKKA…KAAKGKGKKK (77 aa).

This sequence belongs to the histone H1/H5 family.

The protein resides in the nucleus. It is found in the chromosome. In terms of biological role, histones H1 are necessary for the condensation of nucleosome chains into higher-order structures. The sequence is that of Histone H1-delta from Strongylocentrotus purpuratus (Purple sea urchin).